Here is a 328-residue protein sequence, read N- to C-terminus: Probable D,D-dipeptide transport ATP-binding protein DdpD (328 aa).

The region spanning 6–257 is the ABC transporter domain; sequence LDIQQLHLSF…PRHPYTIGLL (252 aa). 42-49 serves as a coordination point for ATP; it reads GESGSGKS.

The protein belongs to the ABC transporter superfamily. As to quaternary structure, the complex is composed of two ATP-binding proteins (DdpD and DdpF), two transmembrane proteins (DdpB and DdpC) and a solute-binding protein (DdpA).

It is found in the cell inner membrane. Its function is as follows. Part of the ABC transporter complex DdpABCDF, which is probably involved in D,D-dipeptide transport. Probably responsible for energy coupling to the transport system. The chain is Probable D,D-dipeptide transport ATP-binding protein DdpD from Escherichia coli (strain K12).